An 832-amino-acid chain; its full sequence is Subtilisin-like protease SBT2.4 (832 aa).

Residues 1–27 form the signal peptide; that stretch reads METNPRKLRSYSYICLIVCIFVLVVCA. The Inhibitor I9 domain occupies 74–138; the sequence is EAKKIEEIHD…VEEDKGVKLM (65 aa). The Peptidase S8 domain occupies 150–690; that stretch reads QQVWQKISNE…AGHVNPARAL (541 aa). Residue Asp174 is the Charge relay system of the active site. N-linked (GlcNAc...) asparagine glycosylation is found at Asn196 and Asn238. The active-site Charge relay system is His252. One can recognise a PA domain in the interval 425 to 524; the sequence is TNGSVLQPLT…SAAQIILRYY (100 aa). N-linked (GlcNAc...) asparagine glycosylation is present at Asn426. Ser618 (charge relay system) is an active-site residue. Asn761, Asn774, and Asn800 each carry an N-linked (GlcNAc...) asparagine glycan.

Belongs to the peptidase S8 family.

The protein localises to the secreted. Its function is as follows. Serine protease required for epidermal surface formation in embryos and juvenile plants. Involved in embryonic cuticle formation downstream of BHLH95/ZOU. This Arabidopsis thaliana (Mouse-ear cress) protein is Subtilisin-like protease SBT2.4.